The following is a 578-amino-acid chain: MAQISKCSSLSAELNESSIISHHHGNLWADDFIQSLKSSNGAPQYHKRAEKLVEEIKNLVVSEMKDCNDDLIRRLQMVDIFECLGIDRHFQHEIQVALDYVYRYWNELEGIGIGSRDSLIKDFNATALGFRALRLHRYNVSSDVLENFKNENGQFFCSSTVEEKEVRCMLTLFRASEISFPGEKVMDEAKAFTTEYLTKVLTGVDVTDVDQSLLREVKYALEFPWHCSLPRWEARSFIEICGQNDSWLKSIMNKRVLELAKLDFNILQCAHHRELQLLSSWWSQSDIAQQNFYRKRHVEYYLWVVIGTFEPEFSTCRIAFAKIATLMTILDDLYDTHGTLEQLKIFTEGVKRWDLSLVDRLPDYIKITFEFFLNTSNELIAEVAKTQERDMSAYIRKTWERYLEAYLQEAEWIAARHVPTFDEYMKNGISSSGMCILNLYSLLLMGQLLPDDVLEQIHSPSKIHELVELTARLVDDSKDFETKKAGGELASGIECYVKDNPECTLEDASNHLIGLLDLTVKELNWEFVRHDSVALCFKKFAFNVARGLRLIYKYRDGFDVSNQEMKTHIFKILIDPLT.

Mg(2+)-binding residues include aspartate 331, aspartate 335, and aspartate 475. The short motif at 331 to 335 is the DDXXD motif element; that stretch reads DDLYD.

It belongs to the terpene synthase family. Tpsd subfamily. Mg(2+) is required as a cofactor. Requires Mn(2+) as cofactor.

It catalyses the reaction (2E,6E)-farnesyl diphosphate = longifolene + diphosphate. It participates in sesquiterpene biosynthesis. Its pathway is terpene metabolism; oleoresin biosynthesis. Terpene synthase (TPS) involved in the biosynthesis of sesquiterpene natural products included in conifer oleoresin secretions and volatile emissions; these compounds contribute to biotic and abiotic stress defense against herbivores and pathogens. Catalyzes the conversion of (2E,6E)-farnesyl diphosphate (FPP) to longifolene. In Picea engelmannii x Picea glauca (Hybrid white spruce), this protein is Longifolene synthase.